The sequence spans 293 residues: Protease HtpX (293 aa).

Helical transmembrane passes span 4 to 24 and 33 to 53; these read ISLF…VLSL and AGLM…SLLM. Residue His139 participates in Zn(2+) binding. Residue Glu140 is part of the active site. His143 contacts Zn(2+). The next 2 helical transmembrane spans lie at 158–178 and 193–213; these read VVNT…AGFM and LVYF…ASII. Glu222 lines the Zn(2+) pocket.

Belongs to the peptidase M48B family. Zn(2+) is required as a cofactor.

It is found in the cell inner membrane. The polypeptide is Protease HtpX (Sodalis glossinidius (strain morsitans)).